Here is a 109-residue protein sequence, read N- to C-terminus: Thiosulfate sulfurtransferase GlpE (109 aa).

The 89-residue stretch at 16–104 (RNAGAVIVDI…WRHTYPSDVE (89 aa)) folds into the Rhodanese domain. The active-site Cysteine persulfide intermediate is C64.

It belongs to the GlpE family.

The protein localises to the cytoplasm. It catalyses the reaction thiosulfate + hydrogen cyanide = thiocyanate + sulfite + 2 H(+). It carries out the reaction thiosulfate + [thioredoxin]-dithiol = [thioredoxin]-disulfide + hydrogen sulfide + sulfite + 2 H(+). Transferase that catalyzes the transfer of sulfur from thiosulfate to thiophilic acceptors such as cyanide or dithiols. May function in a CysM-independent thiosulfate assimilation pathway by catalyzing the conversion of thiosulfate to sulfite, which can then be used for L-cysteine biosynthesis. In Stutzerimonas stutzeri (strain A1501) (Pseudomonas stutzeri), this protein is Thiosulfate sulfurtransferase GlpE.